Here is a 476-residue protein sequence, read N- to C-terminus: CBL-interacting protein kinase 30 (476 aa).

A Protein kinase domain is found at 17–272; sequence YKLGRLLGRG…ISKIMDRPWF (256 aa). ATP-binding positions include 23-31 and K46; that span reads LGRGTFAKV. The Proton acceptor role is filled by D140. Residues 158-187 are activation loop; it reads DFGLSALDGGLRGDGLLHTTCGTPAYVAPE. The disordered stretch occupies residues 296–315; it reads KEASQQHDDEEDDGFAREKK. An NAF domain is found at 299-353; it reads SQQHDDEEDDGFAREKKKRSNVIMSSPVIDVRPSSMNAFDIISRSRGLDLSKMFD. Residues 358-387 form a PPI region; that stretch reads RSEARFSTRETTTAIVSKLEEIAEAGRFSF.

The protein belongs to the protein kinase superfamily. CAMK Ser/Thr protein kinase family. SNF1 subfamily. Requires Mn(2+) as cofactor.

The catalysed reaction is L-seryl-[protein] + ATP = O-phospho-L-seryl-[protein] + ADP + H(+). The enzyme catalyses L-threonyl-[protein] + ATP = O-phospho-L-threonyl-[protein] + ADP + H(+). Its function is as follows. CIPK serine-threonine protein kinases interact with CBL proteins. Binding of a CBL protein to the regulatory NAF domain of CIPK protein lead to the activation of the kinase in a calcium-dependent manner. The sequence is that of CBL-interacting protein kinase 30 (CIPK30) from Oryza sativa subsp. japonica (Rice).